Here is a 266-residue protein sequence, read N- to C-terminus: Nickel import ATP-binding protein NikE (266 aa).

An ABC transporter domain is found at 4–252 (ISADNIVKIY…RHPASRLLRE (249 aa)). Residue 45-52 (GRSGCGKS) participates in ATP binding.

It belongs to the ABC transporter superfamily. Nickel importer (TC 3.A.1.5.3) family. The complex is composed of two ATP-binding proteins (NikD and NikE), two transmembrane proteins (NikB and NikC) and a solute-binding protein (NikA).

The protein localises to the cell inner membrane. The enzyme catalyses Ni(2+)(out) + ATP + H2O = Ni(2+)(in) + ADP + phosphate + H(+). Part of the ABC transporter complex NikABCDE involved in nickel import. Responsible for energy coupling to the transport system. In Brucella suis biovar 1 (strain 1330), this protein is Nickel import ATP-binding protein NikE.